A 408-amino-acid polypeptide reads, in one-letter code: Peptidase T-like protein RB0614 (408 aa).

Position 80 (His80) interacts with Zn(2+). Asp82 is an active-site residue. Asp142 serves as a coordination point for Zn(2+). The Proton acceptor role is filled by Glu174. Positions 175, 198, and 380 each coordinate Zn(2+).

This sequence belongs to the peptidase M20B family. Zn(2+) serves as cofactor.

The polypeptide is Peptidase T-like protein RB0614 (Rhizobium meliloti (strain 1021) (Ensifer meliloti)).